Reading from the N-terminus, the 268-residue chain is Phosphatidylglycerol--prolipoprotein diacylglyceryl transferase (268 aa).

The next 7 helical transmembrane spans lie at 27–47 (PALR…MWLL), 66–86 (LLFY…VLFY), 104–124 (GGMS…YIAW), 130–150 (FFAV…AGRI), 181–201 (PSQL…LYWF), 208–228 (VGAV…IVET), and 242–262 (FMTM…YLIL). Position 149 (Arg149) interacts with a 1,2-diacyl-sn-glycero-3-phospho-(1'-sn-glycerol).

This sequence belongs to the Lgt family.

It localises to the cell inner membrane. The enzyme catalyses L-cysteinyl-[prolipoprotein] + a 1,2-diacyl-sn-glycero-3-phospho-(1'-sn-glycerol) = an S-1,2-diacyl-sn-glyceryl-L-cysteinyl-[prolipoprotein] + sn-glycerol 1-phosphate + H(+). Its pathway is protein modification; lipoprotein biosynthesis (diacylglyceryl transfer). In terms of biological role, catalyzes the transfer of the diacylglyceryl group from phosphatidylglycerol to the sulfhydryl group of the N-terminal cysteine of a prolipoprotein, the first step in the formation of mature lipoproteins. This is Phosphatidylglycerol--prolipoprotein diacylglyceryl transferase from Shewanella sp. (strain ANA-3).